A 276-amino-acid chain; its full sequence is Large ribosomal subunit protein uL2 (276 aa).

The segment at 224–276 (VMNPVDHPHGGGEGKAPIGRKSPMTPWGKPTLGYKTRKKKNKSDKFIIRRRKK) is disordered. The segment covering 258–276 (KTRKKKNKSDKFIIRRRKK) has biased composition (basic residues).

The protein belongs to the universal ribosomal protein uL2 family. Part of the 50S ribosomal subunit. Forms a bridge to the 30S subunit in the 70S ribosome.

Functionally, one of the primary rRNA binding proteins. Required for association of the 30S and 50S subunits to form the 70S ribosome, for tRNA binding and peptide bond formation. It has been suggested to have peptidyltransferase activity; this is somewhat controversial. Makes several contacts with the 16S rRNA in the 70S ribosome. This is Large ribosomal subunit protein uL2 from Geobacillus stearothermophilus (Bacillus stearothermophilus).